A 292-amino-acid chain; its full sequence is ATP synthase gamma chain (292 aa).

The protein belongs to the ATPase gamma chain family. In terms of assembly, F-type ATPases have 2 components, CF(1) - the catalytic core - and CF(0) - the membrane proton channel. CF(1) has five subunits: alpha(3), beta(3), gamma(1), delta(1), epsilon(1). CF(0) has three main subunits: a, b and c.

It localises to the cell inner membrane. Functionally, produces ATP from ADP in the presence of a proton gradient across the membrane. The gamma chain is believed to be important in regulating ATPase activity and the flow of protons through the CF(0) complex. The polypeptide is ATP synthase gamma chain (Rhodopseudomonas palustris (strain BisB18)).